Consider the following 197-residue polypeptide: Phosphoheptose isomerase (197 aa).

An SIS domain is found at 34-196; the sequence is MVQCLLGGNK…DRTLFPQDEQ (163 aa). 49-51 lines the substrate pocket; it reads NGG. The Zn(2+) site is built by His58 and Glu62. Substrate contacts are provided by residues Glu62, 91 to 92, 117 to 119, Ser122, and Gln172; these read ND and STS. Zn(2+) is bound by residues Gln172 and His180.

It belongs to the SIS family. GmhA subfamily. In terms of assembly, homotetramer. Requires Zn(2+) as cofactor.

It is found in the cytoplasm. It catalyses the reaction 2 D-sedoheptulose 7-phosphate = D-glycero-alpha-D-manno-heptose 7-phosphate + D-glycero-beta-D-manno-heptose 7-phosphate. The protein operates within carbohydrate biosynthesis; D-glycero-D-manno-heptose 7-phosphate biosynthesis; D-glycero-alpha-D-manno-heptose 7-phosphate and D-glycero-beta-D-manno-heptose 7-phosphate from sedoheptulose 7-phosphate: step 1/1. In terms of biological role, catalyzes the isomerization of sedoheptulose 7-phosphate in D-glycero-D-manno-heptose 7-phosphate. The chain is Phosphoheptose isomerase from Shewanella frigidimarina (strain NCIMB 400).